Consider the following 554-residue polypeptide: Guanine nucleotide-binding protein alpha-2 subunit (554 aa).

Disordered stretches follow at residues 1–139 (MGLC…NNSN) and 157–183 (VNGN…THSG). The N-myristoyl glycine moiety is linked to residue G2. C4 carries S-palmitoyl cysteine lipidation. Basic and acidic residues-rich tracts occupy residues 7 to 17 (KDSRESTHDGG) and 28 to 43 (ANRR…DKKQ). Residues 52 to 66 (GSIVNAASNINNSSS) are compositionally biased toward low complexity. Polar residues predominate over residues 67 to 85 (GKTKISTVSEDGTVSNGVG). A compositionally biased stretch (low complexity) spans 91–139 (DNANNKNNGNNNNSNNNDNNNNNNNNIGNNINGNNNNDSENIHDSNNSN). Positions 228 to 554 (NALKVLLLGS…ENSLKDSGVL (327 aa)) constitute a G-alpha domain. Positions 231 to 244 (KVLLLGSGESGKST) are G1 motif. Residues E239, S240, G241, K242, S243, T244, D351, I376, T382, G405, N471, K472, D474, and A526 each coordinate GTP. S243 lines the Mg(2+) pocket. A G2 motif region spans residues 374 to 382 (DVIRTRKKT). T382 is a binding site for Mg(2+). The segment at 398 to 407 (LHFFDVGGQR) is G3 motif. The interval 467–474 (VLFLNKID) is G4 motif. The segment at 524 to 529 (TQATDT) is G5 motif.

Belongs to the G-alpha family. As to quaternary structure, g proteins are composed of 3 units; alpha, beta and gamma. The alpha chain contains the guanine nucleotide binding site. It depends on Mg(2+) as a cofactor.

Guanine nucleotide-binding proteins (G proteins) are involved as modulators or transducers in various transmembrane signaling systems. This protein may be involved in the determination of the cAMP level according to nutritional conditions, most probably as a regulator of adenylyl cyclase. This chain is Guanine nucleotide-binding protein alpha-2 subunit (GPA2), found in Kluyveromyces lactis (strain ATCC 8585 / CBS 2359 / DSM 70799 / NBRC 1267 / NRRL Y-1140 / WM37) (Yeast).